Consider the following 105-residue polypeptide: Large ribosomal subunit protein uL24 (105 aa).

The protein belongs to the universal ribosomal protein uL24 family. As to quaternary structure, part of the 50S ribosomal subunit.

Its function is as follows. One of two assembly initiator proteins, it binds directly to the 5'-end of the 23S rRNA, where it nucleates assembly of the 50S subunit. Functionally, one of the proteins that surrounds the polypeptide exit tunnel on the outside of the subunit. The chain is Large ribosomal subunit protein uL24 from Marinomonas sp. (strain MWYL1).